The primary structure comprises 720 residues: Putative glutamine--fructose-6-phosphate aminotransferase [isomerizing] (720 aa).

The Nucleophile; for GATase activity role is filled by cysteine 2. The region spanning cysteine 2–glycine 321 is the Glutamine amidotransferase type-2 domain. A compositionally biased stretch (polar residues) spans serine 266 to proline 280. Residues serine 266 to leucine 285 form a disordered region. SIS domains are found at residues tryptophan 393 to serine 532 and cysteine 565 to proline 710.

The catalysed reaction is D-fructose 6-phosphate + L-glutamine = D-glucosamine 6-phosphate + L-glutamate. It participates in nucleotide-sugar biosynthesis; UDP-N-acetyl-alpha-D-glucosamine biosynthesis; alpha-D-glucosamine 6-phosphate from D-fructose 6-phosphate: step 1/1. Functionally, involved in amino sugar synthesis (formation of chitin, supplies the amino sugars of asparagine-linked oligosaccharides of glycoproteins). The protein is Putative glutamine--fructose-6-phosphate aminotransferase [isomerizing] of Saccharomyces cerevisiae (strain RM11-1a) (Baker's yeast).